The sequence spans 112 residues: Putative pterin-4-alpha-carbinolamine dehydratase (112 aa).

This sequence belongs to the pterin-4-alpha-carbinolamine dehydratase family.

The enzyme catalyses (4aS,6R)-4a-hydroxy-L-erythro-5,6,7,8-tetrahydrobiopterin = (6R)-L-erythro-6,7-dihydrobiopterin + H2O. This Shewanella denitrificans (strain OS217 / ATCC BAA-1090 / DSM 15013) protein is Putative pterin-4-alpha-carbinolamine dehydratase.